The sequence spans 405 residues: Amino sugar nitrososynthase DnmZ (405 aa).

Residues glutamate 117 and arginine 332 each contribute to the dTDP site.

It belongs to the acyl-CoA dehydrogenase family. As to quaternary structure, homotetramer. FAD serves as cofactor.

The protein operates within antibiotic biosynthesis. Its function is as follows. Nitrososynthase involved in the biosynthesis of baumycin. Catalyzes the double-oxidation of TDP-L-epi-vancosamine to TDP-L-epi-vancosonitrose. The rapid turnover of TDP-L-epi-vancosamine suggests that this compound, or a closely related analog, is the natural substrate for DnmZ. Can also catalyze the double-oxidation of TDP-L-evernosamine to TDP-L-evernitrosose. In Streptomyces peucetius, this protein is Amino sugar nitrososynthase DnmZ.